The following is a 310-amino-acid chain: Imidazolonepropionase (310 aa).

2 residues coordinate 4-imidazolone-5-propanoate: Tyr42 and His75. Tyr42 lines the N-formimidoyl-L-glutamate pocket. His140 serves as a coordination point for Fe(3+). Zn(2+) is bound at residue His140. Residue Glu143 participates in 4-imidazolone-5-propanoate binding. Residue Asp215 coordinates Fe(3+). Residue Asp215 coordinates Zn(2+). Asn217 and Gly219 together coordinate N-formimidoyl-L-glutamate. Residue Ser220 coordinates 4-imidazolone-5-propanoate.

Belongs to the metallo-dependent hydrolases superfamily. HutI family. Requires Zn(2+) as cofactor. It depends on Fe(3+) as a cofactor.

Its subcellular location is the cytoplasm. It carries out the reaction 4-imidazolone-5-propanoate + H2O = N-formimidoyl-L-glutamate. It participates in amino-acid degradation; L-histidine degradation into L-glutamate; N-formimidoyl-L-glutamate from L-histidine: step 3/3. Functionally, catalyzes the hydrolytic cleavage of the carbon-nitrogen bond in imidazolone-5-propanoate to yield N-formimidoyl-L-glutamate. It is the third step in the universal histidine degradation pathway. In Streptococcus gordonii, this protein is Imidazolonepropionase (hutI).